The primary structure comprises 163 residues: Nucleotide-binding protein Cj0374 (163 aa).

Belongs to the YajQ family.

Its function is as follows. Nucleotide-binding protein. This Campylobacter jejuni subsp. jejuni serotype O:2 (strain ATCC 700819 / NCTC 11168) protein is Nucleotide-binding protein Cj0374.